The sequence spans 120 residues: MFLLHEYDIFWAFLMISSVIPILAFLISGVLAPISQGPEKVSSYESGIEPMGDAWIQFRIRYYMFALVFVVFDVETVFLYPWAMSFDVLGVSVFIEALIFVLIPIVGSVYAWRKGALEWS.

3 consecutive transmembrane segments (helical) span residues 9-29 (IFWA…LISG), 64-84 (MFAL…PWAM), and 88-108 (VLGV…IVGS).

Belongs to the complex I subunit 3 family. In terms of assembly, NDH is composed of at least 16 different subunits, 5 of which are encoded in the nucleus.

The protein resides in the plastid. Its subcellular location is the chloroplast thylakoid membrane. It carries out the reaction a plastoquinone + NADH + (n+1) H(+)(in) = a plastoquinol + NAD(+) + n H(+)(out). The catalysed reaction is a plastoquinone + NADPH + (n+1) H(+)(in) = a plastoquinol + NADP(+) + n H(+)(out). Its function is as follows. NDH shuttles electrons from NAD(P)H:plastoquinone, via FMN and iron-sulfur (Fe-S) centers, to quinones in the photosynthetic chain and possibly in a chloroplast respiratory chain. The immediate electron acceptor for the enzyme in this species is believed to be plastoquinone. Couples the redox reaction to proton translocation, and thus conserves the redox energy in a proton gradient. The protein is NAD(P)H-quinone oxidoreductase subunit 3, chloroplastic of Amborella trichopoda.